The following is a 276-amino-acid chain: Large ribosomal subunit protein uL2 (276 aa).

A disordered region spans residues 222–276; sequence GVAMNPIDHPLGGGEGRSSGGRHPVSPWGMPTKGYKTRDRKKASSKLIIKRRGQK. Residues 259 to 276 are compositionally biased toward basic residues; sequence RDRKKASSKLIIKRRGQK.

This sequence belongs to the universal ribosomal protein uL2 family. Part of the 50S ribosomal subunit. Forms a bridge to the 30S subunit in the 70S ribosome.

In terms of biological role, one of the primary rRNA binding proteins. Required for association of the 30S and 50S subunits to form the 70S ribosome, for tRNA binding and peptide bond formation. It has been suggested to have peptidyltransferase activity; this is somewhat controversial. Makes several contacts with the 16S rRNA in the 70S ribosome. The polypeptide is Large ribosomal subunit protein uL2 (Nitratidesulfovibrio vulgaris (strain ATCC 29579 / DSM 644 / CCUG 34227 / NCIMB 8303 / VKM B-1760 / Hildenborough) (Desulfovibrio vulgaris)).